Reading from the N-terminus, the 251-residue chain is Vacuolar protein sorting-associated protein 37D (251 aa).

One can recognise a VPS37 C-terminal domain in the interval 93 to 182; sequence AENCADKLQR…RRRERSAQPA (90 aa). The tract at residues 174–251 is disordered; sequence RRERSAQPAP…RPSQPEPPHR (78 aa). Pro residues predominate over residues 221–251; it reads PVPPLKGSPGCPLGPAPLLSPRPSQPEPPHR.

This sequence belongs to the VPS37 family. Component of the ESCRT-I complex (endosomal sorting complex required for transport I) which consists of TSG101, VPS28, a VPS37 protein (VPS37A to -D) and MVB12A or MVB12B in a 1:1:1:1 stoichiometry. Interacts with TSG101 and MVB12A. Component of the ESCRT-I complex (endosomal sorting complex required for transport I) which consists of TSG101, VPS28, a VPS37 protein (VPS37A to -D) and UBAP1 in a 1:1:1:1 stoichiometry.

The protein localises to the late endosome membrane. In terms of biological role, component of the ESCRT-I complex, a regulator of vesicular trafficking process. Required for the sorting of endocytic ubiquitinated cargos into multivesicular bodies. May be involved in cell growth and differentiation. In Homo sapiens (Human), this protein is Vacuolar protein sorting-associated protein 37D.